Here is a 101-residue protein sequence, read N- to C-terminus: MTPFNPDSIGDYVTLLGVAFLTFSVPAWFTGRARKHSSDIGEIKEQVCNTHDTNLRDDLDSVKADISDLKEIVLQGFHQVNESINLERRERIEGDRRKEVA.

The sequence is that of Gene 30 protein (30) from Mycobacterium phage L5 (Mycobacteriophage L5).